The sequence spans 289 residues: Phosphatidylserine decarboxylase proenzyme (289 aa).

Residues D89, H146, and S252 each act as charge relay system; for autoendoproteolytic cleavage activity in the active site. S252 serves as the catalytic Schiff-base intermediate with substrate; via pyruvic acid; for decarboxylase activity. Pyruvic acid (Ser); by autocatalysis is present on S252.

It belongs to the phosphatidylserine decarboxylase family. PSD-B subfamily. Prokaryotic type I sub-subfamily. In terms of assembly, heterodimer of a large membrane-associated beta subunit and a small pyruvoyl-containing alpha subunit. Pyruvate is required as a cofactor. In terms of processing, is synthesized initially as an inactive proenzyme. Formation of the active enzyme involves a self-maturation process in which the active site pyruvoyl group is generated from an internal serine residue via an autocatalytic post-translational modification. Two non-identical subunits are generated from the proenzyme in this reaction, and the pyruvate is formed at the N-terminus of the alpha chain, which is derived from the carboxyl end of the proenzyme. The autoendoproteolytic cleavage occurs by a canonical serine protease mechanism, in which the side chain hydroxyl group of the serine supplies its oxygen atom to form the C-terminus of the beta chain, while the remainder of the serine residue undergoes an oxidative deamination to produce ammonia and the pyruvoyl prosthetic group on the alpha chain. During this reaction, the Ser that is part of the protease active site of the proenzyme becomes the pyruvoyl prosthetic group, which constitutes an essential element of the active site of the mature decarboxylase.

The protein resides in the cell membrane. It catalyses the reaction a 1,2-diacyl-sn-glycero-3-phospho-L-serine + H(+) = a 1,2-diacyl-sn-glycero-3-phosphoethanolamine + CO2. Its pathway is phospholipid metabolism; phosphatidylethanolamine biosynthesis; phosphatidylethanolamine from CDP-diacylglycerol: step 2/2. Functionally, catalyzes the formation of phosphatidylethanolamine (PtdEtn) from phosphatidylserine (PtdSer). The sequence is that of Phosphatidylserine decarboxylase proenzyme from Nitrosospira multiformis (strain ATCC 25196 / NCIMB 11849 / C 71).